Reading from the N-terminus, the 148-residue chain is Large ribosomal subunit protein uL15 (148 aa).

The interval 1–50 is disordered; that stretch reads MNLSNLKPAEGSTKTRKRIGRGPGSGLGGTSTRGHKGAKSRSGYSKKIGF. Gly residues predominate over residues 21–31; that stretch reads RGPGSGLGGTS.

The protein belongs to the universal ribosomal protein uL15 family. Part of the 50S ribosomal subunit.

Its function is as follows. Binds to the 23S rRNA. The sequence is that of Large ribosomal subunit protein uL15 from Bacteroides fragilis (strain ATCC 25285 / DSM 2151 / CCUG 4856 / JCM 11019 / LMG 10263 / NCTC 9343 / Onslow / VPI 2553 / EN-2).